Here is a 213-residue protein sequence, read N- to C-terminus: Pyridoxine/pyridoxamine 5'-phosphate oxidase (213 aa).

Residues 9-12 (RLEY) and Lys-67 each bind substrate. Residues 62-67 (RIVLLK), 77-78 (YT), Arg-83, Lys-84, and Gln-106 contribute to the FMN site. Residues Tyr-124, Arg-128, and Ser-132 each coordinate substrate. Residues 141–142 (QS) and Trp-185 each bind FMN. A substrate-binding site is contributed by 191–193 (RLH). Arg-195 contributes to the FMN binding site.

The protein belongs to the pyridoxamine 5'-phosphate oxidase family. In terms of assembly, homodimer. FMN is required as a cofactor.

It catalyses the reaction pyridoxamine 5'-phosphate + O2 + H2O = pyridoxal 5'-phosphate + H2O2 + NH4(+). The enzyme catalyses pyridoxine 5'-phosphate + O2 = pyridoxal 5'-phosphate + H2O2. Its pathway is cofactor metabolism; pyridoxal 5'-phosphate salvage; pyridoxal 5'-phosphate from pyridoxamine 5'-phosphate: step 1/1. It functions in the pathway cofactor metabolism; pyridoxal 5'-phosphate salvage; pyridoxal 5'-phosphate from pyridoxine 5'-phosphate: step 1/1. Functionally, catalyzes the oxidation of either pyridoxine 5'-phosphate (PNP) or pyridoxamine 5'-phosphate (PMP) into pyridoxal 5'-phosphate (PLP). This Chromobacterium violaceum (strain ATCC 12472 / DSM 30191 / JCM 1249 / CCUG 213 / NBRC 12614 / NCIMB 9131 / NCTC 9757 / MK) protein is Pyridoxine/pyridoxamine 5'-phosphate oxidase.